A 294-amino-acid chain; its full sequence is Survival motor neuron protein (294 aa).

Positions 1–12 (MAMSSGGSGGGV) are enriched in gly residues. Residues 1-32 (MAMSSGGSGGGVPEQEDSVLFRRGTGQSDDSD) are disordered. An N-acetylalanine modification is found at Ala2. 3 positions are modified to phosphoserine; by PKA: Ser4, Ser5, and Ser8. Residues 13-44 (PEQEDSVLFRRGTGQSDDSDIWDDTALIKAYD) form a P1 (binding site for GEMIN2) region. Residue Thr25 is modified to Phosphothreonine. A phosphoserine mark is found at Ser28 and Ser31. Residue Lys51 forms a Glycyl lysine isopeptide (Lys-Gly) (interchain with G-Cter in SUMO2) linkage. The tract at residues 58-88 (DICETSGKPKTTPKRKPAKKNKSQKKNTAAP) is disordered. Positions 68 to 82 (TTPKRKPAKKNKSQK) are enriched in basic residues. Residue Thr69 is modified to Phosphothreonine. Thr85 is subject to Phosphothreonine; by PKA. Positions 91–151 (QWKVGDKCSA…LSPISEVANN (61 aa)) constitute a Tudor domain. A required for interaction with RPP20/POP7 region spans residues 97–209 (KCSAIWSEDG…MPGPRLGPGK (113 aa)). A compositionally biased stretch (low complexity) spans 156 to 166 (AQENENESQVS). Residues 156–222 (AQENENESQV…KFNGPPPPPP (67 aa)) form a disordered region. Residue Ser187 is modified to Phosphoserine; by PKA. Residues 194-204 (LPPPPPMPGPR) are compositionally biased toward pro residues. Lys209 is covalently cross-linked (Glycyl lysine isopeptide (Lys-Gly) (interchain with G-Cter in SUMO2)). The interval 240 to 267 (PPIIPPPPPICPDSLDDADALGSMLISW) is P2 (binding site for SM B). Residues 279 to 294 (GFRQNQKEGRCSHSLN) are required for interaction with SYNCRIP.

Belongs to the SMN family. In terms of assembly, homooligomer; may form higher order homooligomers in the dimer to octamer range. Part of the core SMN complex that contains SMN1, GEMIN2/SIP1, DDX20/GEMIN3, GEMIN4, GEMIN5, GEMIN6, GEMIN7, GEMIN8 and STRAP/UNRIP. Part of the SMN-Sm complex that contains SMN1, GEMIN2/SIP1, DDX20/GEMIN3, GEMIN4, GEMIN5, GEMIN6, GEMIN7, GEMIN8, STRAP/UNRIP and the Sm proteins SNRPB, SNRPD1, SNRPD2, SNRPD3, SNRPE, SNRPF and SNRPG. Component of an import snRNP complex composed of KPNB1, RNUT1, SMN1 and ZNF259. Interacts with DDX20, FBL, NOLA1, RNUT1, SYNCRIP and with several spliceosomal snRNP core Sm proteins, including SNRPB, SNRPD1, SNRPD2, SNRPD3, SNRPE and ILF3. Interacts with GEMIN2; the interaction is direct. Interacts with GEMIN3; the interaction is direct. Interacts with GEMIN8; the interaction is direct. Interacts with SNRPB; the interaction is direct. Interacts (via Tudor domain) with SNRPD1 (via C-terminus); the interaction is direct. Interacts with SNRPD2; the interaction is direct. Interacts (via Tudor domain) with SNRPD3 (via C-terminus); the interaction is direct. Interacts with SNRPE; the interaction is direct. Interacts with OSTF1, LSM10, LSM11 and RPP20/POP7. Interacts (via C-terminal region) with ZPR1 (via C-terminal region). Interacts (via Tudor domain) with COIL. Interacts with SETX; recruits SETX to POLR2A. Interacts with POLR2A (via the C-terminal domain (CTD)). Interacts with PRMT5. Interacts with XRN2. Interacts (via C-terminus) with FMR1 (via C-terminus); the interaction is direct and occurs in a RNA-independent manner. Interacts (via Tudor domain) with SF3B2 ('Arg-508'-methylated form). Interacts with WRAP53/TCAB1. Interacts (via Tudor domain) with ELAVL4 in an RNA-independent manner; the interaction is required for localization of ELAVL4 to RNA granules. Interacts with FRG1.

The protein resides in the nucleus. It is found in the gem. It localises to the cajal body. The protein localises to the cytoplasm. Its subcellular location is the cytoplasmic granule. The protein resides in the perikaryon. It is found in the cell projection. It localises to the neuron projection. The protein localises to the axon. Its subcellular location is the myofibril. The protein resides in the sarcomere. It is found in the z line. The SMN complex catalyzes the assembly of small nuclear ribonucleoproteins (snRNPs), the building blocks of the spliceosome, and thereby plays an important role in the splicing of cellular pre-mRNAs. Most spliceosomal snRNPs contain a common set of Sm proteins SNRPB, SNRPD1, SNRPD2, SNRPD3, SNRPE, SNRPF and SNRPG that assemble in a heptameric protein ring on the Sm site of the small nuclear RNA to form the core snRNP (Sm core). In the cytosol, the Sm proteins SNRPD1, SNRPD2, SNRPE, SNRPF and SNRPG are trapped in an inactive 6S pICln-Sm complex by the chaperone CLNS1A that controls the assembly of the core snRNP. To assemble core snRNPs, the SMN complex accepts the trapped 5Sm proteins from CLNS1A forming an intermediate. Binding of snRNA inside 5Sm ultimately triggers eviction of the SMN complex, thereby allowing binding of SNRPD3 and SNRPB to complete assembly of the core snRNP. Within the SMN complex, SMN1 acts as a structural backbone and together with GEMIN2 it gathers the Sm complex subunits. Ensures the correct splicing of U12 intron-containing genes that may be important for normal motor and proprioceptive neurons development. Also required for resolving RNA-DNA hybrids created by RNA polymerase II, that form R-loop in transcription terminal regions, an important step in proper transcription termination. May also play a role in the metabolism of small nucleolar ribonucleoprotein (snoRNPs). The chain is Survival motor neuron protein (SMN1) from Macaca fascicularis (Crab-eating macaque).